Here is a 225-residue protein sequence, read N- to C-terminus: Cbp/p300-interacting transactivator 2 (225 aa).

Belongs to the CITED family.

It localises to the nucleus. Functionally, transcriptional coactivator or corepressor of the p300/CBP-mediated transcription complex. May be involved in sex determination, early gonad development, left-right patterning during embryogenesis and differentiation of the adrenal cortex. This chain is Cbp/p300-interacting transactivator 2 (cited2), found in Xenopus tropicalis (Western clawed frog).